A 405-amino-acid chain; its full sequence is Arginine biosynthesis bifunctional protein ArgJ (405 aa).

Positions 152, 178, 189, 276, 400, and 405 each coordinate substrate. Thr-189 serves as the catalytic Nucleophile.

This sequence belongs to the ArgJ family. Heterotetramer of two alpha and two beta chains.

The protein resides in the cytoplasm. The catalysed reaction is N(2)-acetyl-L-ornithine + L-glutamate = N-acetyl-L-glutamate + L-ornithine. It carries out the reaction L-glutamate + acetyl-CoA = N-acetyl-L-glutamate + CoA + H(+). Its pathway is amino-acid biosynthesis; L-arginine biosynthesis; L-ornithine and N-acetyl-L-glutamate from L-glutamate and N(2)-acetyl-L-ornithine (cyclic): step 1/1. The protein operates within amino-acid biosynthesis; L-arginine biosynthesis; N(2)-acetyl-L-ornithine from L-glutamate: step 1/4. Functionally, catalyzes two activities which are involved in the cyclic version of arginine biosynthesis: the synthesis of N-acetylglutamate from glutamate and acetyl-CoA as the acetyl donor, and of ornithine by transacetylation between N(2)-acetylornithine and glutamate. The protein is Arginine biosynthesis bifunctional protein ArgJ of Chromobacterium violaceum (strain ATCC 12472 / DSM 30191 / JCM 1249 / CCUG 213 / NBRC 12614 / NCIMB 9131 / NCTC 9757 / MK).